Reading from the N-terminus, the 2156-residue chain is MAM and LDL-receptor class A domain-containing protein 1 (2156 aa).

An N-terminal signal peptide occupies residues 1-31 (MLFFLDRMLAFPMNETFCCLWIACVFNSTLA). At 32–2076 (QQGTESFQCD…FTYAQNNTWT (2045 aa)) the chain is on the vesicular side. In terms of domain architecture, LDL-receptor class A 1 spans 33 to 68 (QGTESFQCDNGVSLPPDSICDFTDQCGDSSDERHCL). 2 disulfide bridges follow: Cys-40–Cys-58 and Cys-52–Cys-67. MAM domains lie at 71-229 (ERCD…GCLP) and 268-427 (QACG…ACGQ). The LDL-receptor class A 2 domain maps to 433–471 (LCSADEFPCTSGQCIAKESVCDSRQDCSDESDEDPATCS). 3 disulfides stabilise this stretch: Cys-434–Cys-446, Cys-441–Cys-459, and Cys-453–Cys-470. MAM domains follow at residues 474-637 (LTCD…ECEI) and 652-816 (SKCD…NCTL). A glycan (N-linked (GlcNAc...) asparagine) is linked at Asn-813. One can recognise an LDL-receptor class A 3 domain in the interval 822-860 (SCEGLDHFWCRHTRACIEKLRLCDLVDDCGDRTDEVNCA). Disulfide bonds link Cys-823–Cys-837, Cys-831–Cys-850, and Cys-844–Cys-859. One can recognise an MAM 5 domain in the interval 863 to 1024 (LQCNFETGIC…DDLSFMDCTL (162 aa)). Asn-1049 carries an N-linked (GlcNAc...) asparagine glycan. Residues 1049 to 1086 (NCTDNEFICRSDGHCIEKMQKCDFKYDCPDKSDEASCV) form the LDL-receptor class A 4 domain. 3 disulfides stabilise this stretch: Cys-1050–Cys-1063, Cys-1057–Cys-1076, and Cys-1070–Cys-1085. The 169-residue stretch at 1088–1256 (EVCSFEKRSL…DDISFQDCSP (169 aa)) folds into the MAM 6 domain. N-linked (GlcNAc...) asparagine glycosylation occurs at Asn-1199. One can recognise an LDL-receptor class A 5 domain in the interval 1263–1301 (KCTDHEFMCANKHCIAKDKLCDFVNDCADNSDETTFICR). Disulfide bonds link Cys-1264–Cys-1276, Cys-1271–Cys-1289, and Cys-1283–Cys-1300. Residues 1305-1465 (GRCDFEFDLC…DIVLTENCLS (161 aa)) enclose the MAM 7 domain. N-linked (GlcNAc...) asparagine glycosylation occurs at Asn-1414. Positions 1482–1518 (FCPLGYRECHNGKCYRLEQSCNFVDNCGDNTDENECG) constitute an LDL-receptor class A 6 domain. 3 disulfide bridges follow: Cys-1483-Cys-1495, Cys-1490-Cys-1508, and Cys-1502-Cys-1517. The region spanning 1519–1676 (SSCTFEKGWC…DDIEFKNCTT (158 aa)) is the MAM 8 domain. The LDL-receptor class A 7 domain maps to 1683–1720 (LCPEITDFLCRDKKCIASHLLCDYKPDCSDRSDEAHCA). 3 disulfides stabilise this stretch: Cys-1684/Cys-1697, Cys-1692/Cys-1710, and Cys-1704/Cys-1719. One can recognise an MAM 9 domain in the interval 1727–1892 (GSCNFETSSG…DISFTPECVT (166 aa)). LDL-receptor class A domains are found at residues 1902-1939 (PCEA…MDCP), 1946-1982 (LCSN…LICS), and 1985-2023 (SCSN…SSCS). 12 disulfides stabilise this stretch: Cys-1903–Cys-1916, Cys-1910–Cys-1929, Cys-1923–Cys-1938, Cys-1947–Cys-1959, Cys-1954–Cys-1972, Cys-1966–Cys-1981, Cys-1986–Cys-1999, Cys-1993–Cys-2012, Cys-2006–Cys-2022, Cys-2025–Cys-2036, Cys-2030–Cys-2045, and Cys-2047–Cys-2056. One can recognise an EGF-like domain in the interval 2024–2057 (ECPLNYCRNGGTCVVEKNGPMCRCRQGWKGNRCH). The helical transmembrane segment at 2077–2097 (LLGIGLAFLMTHITVAVLCFL) threads the bilayer. Over 2098–2156 (ANRKVPIRKTEGSGNCAFVNPVYGNWSNPEKTESSVYSFSNPLYGTTSGSLETLSHHLK) the chain is Cytoplasmic.

In terms of assembly, interacts with FGF19. As to expression, strongly expressed in the small intestine.

The protein resides in the cytoplasmic vesicle membrane. Functionally, enhances production and/or transport of FGF19 and thus has a role in regulation of bile acid synthesis. In Homo sapiens (Human), this protein is MAM and LDL-receptor class A domain-containing protein 1.